Here is a 438-residue protein sequence, read N- to C-terminus: DNA primase small subunit (438 aa).

Residues glutamate 63, aspartate 127, and aspartate 129 contribute to the active site. Residues 139-149 (CCSGAGVCLKC) carry the Zinc knuckle motif motif.

The protein belongs to the eukaryotic-type primase small subunit family. In terms of assembly, heterodimer of a catalytic subunit Prim1 and a regulatory subunit Prim2, also known as the DNA primase complex. Component of the alpha DNA polymerase complex (also known as the alpha DNA polymerase-primase complex) consisting of four subunits: the catalytic subunit PolA1, the regulatory subunit PolA2, and the primase complex subunits Prim1 and Prim2 respectively. PolA1 associates with the DNA primase complex before association with PolA2. It depends on Mg(2+) as a cofactor. Requires Mn(2+) as cofactor. As to expression, expressed in embryos (at protein level).

Its activity is regulated as follows. The presence of the regulatory subunit Prim2 accelerates the kinetics of initiation and primer extension. Functionally, catalytic subunit of the DNA primase complex and component of the DNA polymerase alpha complex (also known as the alpha DNA polymerase-primase complex) which play an essential role in the initiation of DNA synthesis. During the S phase of the cell cycle, the DNA polymerase alpha complex (composed of a catalytic subunit PolA1, an accessory subunit PolA2 and two primase subunits, the catalytic subunit Prim1 and the regulatory subunit Prim2) is recruited to DNA at the replicative forks. The primase subunit of the polymerase alpha complex initiates DNA synthesis by oligomerising short RNA primers on both leading and lagging strands. These primers are initially extended by the polymerase alpha catalytic subunit and subsequently transferred to polymerase delta and polymerase epsilon for processive synthesis on the lagging and leading strand, respectively. In the primase complex, both subunits are necessary for the initial di-nucleotide formation, but the extension of the primer depends only on the catalytic subunit. Can add both ribo- and deoxynucleotides during elongation of the primers. Binds single stranded DNA. The protein is DNA primase small subunit of Drosophila melanogaster (Fruit fly).